We begin with the raw amino-acid sequence, 349 residues long: Ion-translocating oxidoreductase complex subunit D (349 aa).

Helical transmembrane passes span 20 to 42 (VMQR…FGWG), 77 to 99 (SAML…WMIV), and 124 to 144 (AMAA…TWIA). Thr185 carries the FMN phosphoryl threonine modification. Helical transmembrane passes span 212-232 (STGV…LVLL), 239-259 (WHIS…GFLL), 265-285 (ASPL…FIAT), 291-311 (ATSP…VYII), and 315-335 (GGYP…APFI).

Belongs to the NqrB/RnfD family. As to quaternary structure, the complex is composed of six subunits: RnfA, RnfB, RnfC, RnfD, RnfE and RnfG. It depends on FMN as a cofactor.

It localises to the cell inner membrane. Part of a membrane-bound complex that couples electron transfer with translocation of ions across the membrane. The chain is Ion-translocating oxidoreductase complex subunit D from Shewanella baltica (strain OS185).